The primary structure comprises 98 residues: Large ribosomal subunit protein uL23 (98 aa).

It belongs to the universal ribosomal protein uL23 family. In terms of assembly, part of the 50S ribosomal subunit. Contacts protein L29, and trigger factor when it is bound to the ribosome.

Its function is as follows. One of the early assembly proteins it binds 23S rRNA. One of the proteins that surrounds the polypeptide exit tunnel on the outside of the ribosome. Forms the main docking site for trigger factor binding to the ribosome. This chain is Large ribosomal subunit protein uL23, found in Frankia casuarinae (strain DSM 45818 / CECT 9043 / HFP020203 / CcI3).